Consider the following 449-residue polypeptide: Serine--tRNA ligase (449 aa).

Thr-255–Glu-257 is an L-serine binding site. Arg-286–Glu-288 is an ATP binding site. Residue Glu-309 coordinates L-serine. Glu-373–Ser-376 is a binding site for ATP. Residue Ser-409 coordinates L-serine.

Belongs to the class-II aminoacyl-tRNA synthetase family. Type-1 seryl-tRNA synthetase subfamily. Homodimer. The tRNA molecule binds across the dimer.

It is found in the cytoplasm. The catalysed reaction is tRNA(Ser) + L-serine + ATP = L-seryl-tRNA(Ser) + AMP + diphosphate + H(+). It catalyses the reaction tRNA(Sec) + L-serine + ATP = L-seryl-tRNA(Sec) + AMP + diphosphate + H(+). Its pathway is aminoacyl-tRNA biosynthesis; selenocysteinyl-tRNA(Sec) biosynthesis; L-seryl-tRNA(Sec) from L-serine and tRNA(Sec): step 1/1. Functionally, catalyzes the attachment of serine to tRNA(Ser). Is also able to aminoacylate tRNA(Sec) with serine, to form the misacylated tRNA L-seryl-tRNA(Sec), which will be further converted into selenocysteinyl-tRNA(Sec). In Bordetella avium (strain 197N), this protein is Serine--tRNA ligase.